Reading from the N-terminus, the 201-residue chain is Small ribosomal subunit protein uS4 (201 aa).

Residues leucine 26–tyrosine 47 form a disordered region. One can recognise an S4 RNA-binding domain in the interval alanine 92–alanine 154.

It belongs to the universal ribosomal protein uS4 family. In terms of assembly, part of the 30S ribosomal subunit. Contacts protein S5. The interaction surface between S4 and S5 is involved in control of translational fidelity.

One of the primary rRNA binding proteins, it binds directly to 16S rRNA where it nucleates assembly of the body of the 30S subunit. Its function is as follows. With S5 and S12 plays an important role in translational accuracy. The polypeptide is Small ribosomal subunit protein uS4 (Porphyromonas gingivalis (strain ATCC 33277 / DSM 20709 / CIP 103683 / JCM 12257 / NCTC 11834 / 2561)).